A 348-amino-acid polypeptide reads, in one-letter code: uncharacterized protein (348 aa).

6 WD repeats span residues G59–S98, G142–T182, D185–T226, Q229–S267, G270–T309, and G312–A347.

This is an uncharacterized protein from Synechocystis sp. (strain ATCC 27184 / PCC 6803 / Kazusa).